Here is a 1487-residue protein sequence, read N- to C-terminus: Collagen alpha-1(II) chain (1487 aa).

Positions 1 to 25 (MIRLGAPQSLVLLTLLIAAVLRCQG) are cleaved as a signal peptide. The propeptide at 26-181 (QDAQEAGSCL…PGLSAGNFAA (156 aa)) is N-terminal propeptide. Positions 32–89 (GSCLQNGQRYKDKDVWKPSSCRICVCDTGNVLCDDIICEDPDCLNPEIPFGECCPICP) constitute a VWFC domain. Positions 96–179 (SGKLGPKGQK…GPPGLSAGNF (84 aa)) are disordered. Basic and acidic residues-rich tracts occupy residues 104 to 115 (QKGEPGDIRDII) and 132 to 153 (PRGDRGDKGEKGAPGPRGRDGE). Residues 157-172 (PGNPGPAGPPGPPGPP) are compositionally biased toward pro residues. 5-hydroxylysine is present on Lys190. O-linked (Gal...) hydroxylysine glycosylation occurs at Lys190. The interval 191 to 1237 (AGGAQMGVMQ…QREKGPDPMQ (1047 aa)) is disordered. Residues 192 to 203 (GGAQMGVMQGPM) show a composition bias toward low complexity. Residues 201–1214 (GPMGPMGPRG…PGPPGPPGPP (1014 aa)) are triple-helical region. The segment covering 208-217 (PRGPPGPAGA) has biased composition (pro residues). Low complexity predominate over residues 218–239 (PGPQGFQGNPGEPGEPGVSGPM). Residues 251-265 (PGDDGEAGKPGKSGE) are compositionally biased toward basic and acidic residues. Residues Lys287, Lys299, and Lys308 each carry the 5-hydroxylysine modification. O-linked (Gal...) hydroxylysine glycans are attached at residues Lys287, Lys299, and Lys308. 2 stretches are compositionally biased toward low complexity: residues 310 to 320 (ESGSPGENGSP) and 335 to 350 (TGPAGAAGARGNDGQP). Positions 360-369 (GPAGGPGFPG) are enriched in gly residues. Composition is skewed to low complexity over residues 370 to 382 (APGAKGEAGPTGA) and 403 to 431 (PAGASGNPGTDGIPGAKGSAGAPGIAGAP). A 5-hydroxylysine modification is found at Lys374. Lys374 carries an O-linked (Gal...) hydroxylysine glycan. Positions 433–442 (FPGPRGPPGP) are enriched in pro residues. Over residues 472 to 485 (ETGPAGPQGAPGPA) the composition is skewed to low complexity. A 5-hydroxylysine mark is found at Lys608 and Lys620. O-linked (Gal...) hydroxylysine glycans are attached at residues Lys608 and Lys620. Low complexity predominate over residues 622–631 (LAGAPGLRGL). 2 positions are modified to 4-hydroxyproline: Pro659 and Pro668. Pro670 carries the 3-hydroxyproline modification. 2 positions are modified to 4-hydroxyproline: Pro671 and Pro674. Residues 706-736 (ERGSPGAQGLQGPRGLPGTPGTDGPKGAAGP) show a composition bias toward low complexity. The span at 764-775 (KGDRGDVGEKGP) shows a compositional bias: basic and acidic residues. Composition is skewed to low complexity over residues 833 to 848 (AGFAGPPGADGQPGAK) and 877 to 914 (PTGVTGPKGARGAQGPPGATGFPGAAGRVGPPGANGNP). Pro907 is modified (3-hydroxyproline). A 4-hydroxyproline mark is found at Pro908, Pro914, and Pro920. Low complexity predominate over residues 962 to 980 (DGPSGLDGPPGPQGLAGQR). Residues 1069 to 1079 (APGPPGSPGPA) are compositionally biased toward pro residues. Positions 1115–1129 (RGDKGESGEQGERGL) are enriched in basic and acidic residues. Pro1144 bears the 3-hydroxyproline mark. Low complexity-rich tracts occupy residues 1148-1157 (SGDQGASGPA) and 1171-1181 (PSGKDGSNGIP). At Pro1181 the chain carries 4-hydroxyproline. Residue Pro1186 is modified to 3-hydroxyproline. A 4-hydroxyproline modification is found at Pro1187. Positions 1199 to 1216 (VGPPGSPGPPGPPGPPGP) are enriched in pro residues. Pro1201 is subject to 3-hydroxyproline. Residues Pro1202 and Pro1205 each carry the 4-hydroxyproline modification. A 3-hydroxyproline modification is found at Pro1207. 4-hydroxyproline occurs at positions 1208 and 1211. Pro1213 bears the 3-hydroxyproline mark. Pro1214 carries the 4-hydroxyproline modification. The nonhelical region (C-terminal) stretch occupies residues 1215–1241 (GPGIDMSAFAGLGQREKGPDPMQYMRA). Residues 1253–1487 (VEVDATLKSL…GVDIGPVCFL (235 aa)) form the Fibrillar collagen NC1 domain. Intrachain disulfides connect Cys1283–Cys1315, Cys1323–Cys1485, and Cys1393–Cys1438. Ca(2+) is bound by residues Asp1301, Asn1303, Gln1304, Cys1306, and Asp1309.

It belongs to the fibrillar collagen family. As to quaternary structure, homotrimers of alpha 1(II) chains. Post-translationally, contains mostly 4-hydroxyproline. Prolines at the third position of the tripeptide repeating unit (G-X-P) are 4-hydroxylated in some or all of the chains. Contains 3-hydroxyproline at a few sites. This modification occurs on the first proline residue in the sequence motif Gly-Pro-Hyp, where Hyp is 4-hydroxyproline. In terms of processing, lysine residues at the third position of the tripeptide repeating unit (G-X-Y) are 5-hydroxylated in some or all of the chains. Post-translationally, O-glycosylated on hydroxylated lysine residues. The O-linked glycan consists of a Glc-Gal disaccharide.

The protein localises to the secreted. It is found in the extracellular space. The protein resides in the extracellular matrix. Its function is as follows. Type II collagen is specific for cartilaginous tissues. It is essential for the normal embryonic development of the skeleton, for linear growth and for the ability of cartilage to resist compressive forces. In Mus musculus (Mouse), this protein is Collagen alpha-1(II) chain.